A 57-amino-acid chain; its full sequence is Orphan toxin OrtT (57 aa).

The next 2 membrane-spanning stretches (helical) occupy residues 6 to 26 (HMLV…WFLS) and 34 to 54 (FLSA…ALLF).

Belongs to the GhoT/OrtT toxin family.

Its subcellular location is the cell inner membrane. Functionally, acts as an orphan toxin which is important for maintaining cell fitness during stress related to the stringent response. Increases the formation of persister cells. Has no known antitoxin. This is Orphan toxin OrtT from Escherichia coli O6:H1 (strain CFT073 / ATCC 700928 / UPEC).